The sequence spans 453 residues: Protein LOW PSII ACCUMULATION 1, chloroplastic (453 aa).

A chloroplast-targeting transit peptide spans 1–92; it reads MAVATAPSLN…LDLFKRGRVK (92 aa). 2 TPR repeats span residues 75–108 and 112–145; these read AELC…APNP and QAAY…YNLK. Transmembrane regions (helical) follow at residues 202–222 and 238–258; these read FFYF…VPRL and TTGN…LFLW.

In terms of assembly, interacts with psbA, but not with psbD, petB, ALB3, LPA2 or LPA3. Is not a component of the PSII complex.

Its subcellular location is the plastid. It is found in the chloroplast thylakoid membrane. In terms of biological role, chaperone required for efficient photosystem II (PSII) assembly. Binds to psbA during de novo biogenesis of PSII. The polypeptide is Protein LOW PSII ACCUMULATION 1, chloroplastic (LPA1) (Arabidopsis thaliana (Mouse-ear cress)).